A 581-amino-acid chain; its full sequence is Arginine--tRNA ligase (581 aa).

Residues 126–136 carry the 'HIGH' region motif; sequence PNLAKEMHVGH.

This sequence belongs to the class-I aminoacyl-tRNA synthetase family. In terms of assembly, monomer.

The protein localises to the cytoplasm. The catalysed reaction is tRNA(Arg) + L-arginine + ATP = L-arginyl-tRNA(Arg) + AMP + diphosphate. The protein is Arginine--tRNA ligase of Shewanella woodyi (strain ATCC 51908 / MS32).